Here is a 566-residue protein sequence, read N- to C-terminus: KsdD-like steroid dehydrogenase Rv0785 (566 aa).

An FAD-binding site is contributed by 23-54 (DAIVVGAGLAGLVAACELADRGLRVLILDQEN).

This sequence belongs to the FAD-dependent oxidoreductase 2 family. The cofactor is FAD.

It functions in the pathway lipid metabolism; steroid biosynthesis. Its function is as follows. Able to catalyze the elimination of the C-1 and C-2 hydrogen atoms of the A-ring from the polycyclic ring structure of 3-ketosteroids. This chain is KsdD-like steroid dehydrogenase Rv0785, found in Mycobacterium tuberculosis (strain ATCC 25618 / H37Rv).